We begin with the raw amino-acid sequence, 244 residues long: U4/U6.U5 tri-snRNP-associated protein 3-like protein C162.01c (244 aa).

Composition is skewed to basic and acidic residues over residues 1–11 (MSSSRSGEHRR) and 20–116 (ESSR…RRDG). Disordered regions lie at residues 1–192 (MSSS…EDEA) and 223–244 (KKTK…LDNE). 2 positions are modified to phosphoserine: Ser121 and Ser140. Residues 126–182 (GLERKREHEKLQAPSPKEEEERPVDQGDKMDGVKEDKDGSLEVGKSHDAMTRTKSAE) are compositionally biased toward basic and acidic residues. The span at 183–192 (EEIVEQEDEA) shows a compositional bias: acidic residues.

This sequence belongs to the SNUT3 family. Part of a tri-snRNP complex.

The protein resides in the nucleus. Functionally, may play a role in mRNA splicing. This chain is U4/U6.U5 tri-snRNP-associated protein 3-like protein C162.01c, found in Schizosaccharomyces pombe (strain 972 / ATCC 24843) (Fission yeast).